The primary structure comprises 201 residues: Large ribosomal subunit protein uL4 (201 aa).

Positions 43–73 (SRGQKTRAEVTGSGKKPWRQKGTGRARSGSV) are disordered.

Belongs to the universal ribosomal protein uL4 family. Part of the 50S ribosomal subunit.

Functionally, one of the primary rRNA binding proteins, this protein initially binds near the 5'-end of the 23S rRNA. It is important during the early stages of 50S assembly. It makes multiple contacts with different domains of the 23S rRNA in the assembled 50S subunit and ribosome. In terms of biological role, forms part of the polypeptide exit tunnel. The sequence is that of Large ribosomal subunit protein uL4 from Sodalis glossinidius (strain morsitans).